The chain runs to 316 residues: Ribosomal RNA small subunit methyltransferase H (316 aa).

S-adenosyl-L-methionine is bound by residues 35–37 (AGH), D55, F84, D105, and Q112.

It belongs to the methyltransferase superfamily. RsmH family.

It localises to the cytoplasm. It catalyses the reaction cytidine(1402) in 16S rRNA + S-adenosyl-L-methionine = N(4)-methylcytidine(1402) in 16S rRNA + S-adenosyl-L-homocysteine + H(+). Its function is as follows. Specifically methylates the N4 position of cytidine in position 1402 (C1402) of 16S rRNA. The protein is Ribosomal RNA small subunit methyltransferase H of Streptococcus gordonii (strain Challis / ATCC 35105 / BCRC 15272 / CH1 / DL1 / V288).